A 166-amino-acid polypeptide reads, in one-letter code: MTDPAPATADGLTHFDTAGNAVMVDVSAKDETERVAVAGGCVEMAPATLRAIIERGLKKGDVLSVAQLAGIMGAKRTPDLIPLCHPLALTKVAVELTPDPDHDRVVITATCALRGRTGVEMEALTAVAVAGLTVYDMCKAVDKGMRLTDIRLLSKTGGKSGTWTAS.

Substrate contacts are provided by residues 83–85 (LCH) and 121–122 (ME). Aspartate 136 is a catalytic residue.

Belongs to the MoaC family. As to quaternary structure, homohexamer; trimer of dimers.

It catalyses the reaction (8S)-3',8-cyclo-7,8-dihydroguanosine 5'-triphosphate = cyclic pyranopterin phosphate + diphosphate. It participates in cofactor biosynthesis; molybdopterin biosynthesis. Its function is as follows. Catalyzes the conversion of (8S)-3',8-cyclo-7,8-dihydroguanosine 5'-triphosphate to cyclic pyranopterin monophosphate (cPMP). The polypeptide is Cyclic pyranopterin monophosphate synthase (Rhodospirillum rubrum (strain ATCC 11170 / ATH 1.1.1 / DSM 467 / LMG 4362 / NCIMB 8255 / S1)).